Consider the following 354-residue polypeptide: Serine/threonine-protein kinase-transforming protein mos (354 aa).

Residues 74–350 enclose the Protein kinase domain; it reads VCLMHRLGSG…LLQRDLKAFR (277 aa). Residues 80 to 88 and lysine 101 each bind ATP; that span reads LGSGGFGSV. The active-site Proton acceptor is aspartate 209.

Belongs to the protein kinase superfamily. Ser/Thr protein kinase family.

The catalysed reaction is L-seryl-[protein] + ATP = O-phospho-L-seryl-[protein] + ADP + H(+). The enzyme catalyses L-threonyl-[protein] + ATP = O-phospho-L-threonyl-[protein] + ADP + H(+). This is Serine/threonine-protein kinase-transforming protein mos (V-MOS) from Moloney murine sarcoma virus (strain ts110) (MoMSV).